Consider the following 316-residue polypeptide: Phosphatidylinositol mannoside acyltransferase (316 aa).

His-137 acts as the Proton acceptor in catalysis. 2 residues coordinate hexadecanoyl-CoA: His-137 and Arg-175. Residue Glu-211 is part of the active site. Glu-240 lines the hexadecanoyl-CoA pocket.

It belongs to the LpxL/LpxM/LpxP family.

Its subcellular location is the cell inner membrane. It carries out the reaction a 2,6-O-bis(alpha-D-mannopyranosyl)-1-phosphatidyl-1D-myo-inositol + an acyl-CoA = a 2-O-(alpha-D-mannosyl)-6-O-(6-O-acyl-alpha-D-mannosyl)-1-phosphatidyl-1D-myo-inositol + CoA. It catalyses the reaction a 1,2-diacyl-sn-glycero-3-phospho-[alpha-D-mannopyranosyl-(1&lt;-&gt;6)-D-myo-inositol] + an acyl-CoA = a 1,2-diacyl-sn-glycero-3-phospho-[alpha-D-6-acyl-mannopyranosyl-(1&lt;-&gt;6)-D-myo-inositol] + CoA. It participates in phospholipid metabolism; phosphatidylinositol metabolism. Its function is as follows. Catalyzes the transfer of a palmitoyl moiety from palmitoyl-CoA to the 6-position of the mannose ring linked to the 2-position of myo-inositol in phosphatidyl-myo-inositol monomannoside (PIM1) or dimannoside (PIM2). The sequence is that of Phosphatidylinositol mannoside acyltransferase from Mycobacterium tuberculosis (strain CDC 1551 / Oshkosh).